The primary structure comprises 718 residues: Acetolactate synthase, mitochondrial (718 aa).

Disordered regions lie at residues 1–53 (MLTR…YDTP) and 75–99 (QSSA…QAAP). The span at 32–45 (RYSNNIHTSSTQNA) shows a compositional bias: polar residues. Low complexity predominate over residues 76–99 (SSASTAAASPAVRPQPAQHFQAAP). Thiamine diphosphate is bound at residue Glu-173. Arg-275 is a binding site for FAD. The disordered stretch occupies residues 301-326 (VQPGHSPYLPSNPLNPSSQPSDPLPG). Low complexity predominate over residues 306–325 (SPYLPSNPLNPSSQPSDPLP). FAD contacts are provided by residues 397 to 418 (HGSA…LGVR) and 449 to 468 (EIQP…VLGD). The thiamine pyrophosphate binding stretch occupies residues 541–621 (QHQMWACQYY…VKVLLFNNEF (81 aa)). Residues Asp-592 and Asn-619 each coordinate Mg(2+).

It belongs to the TPP enzyme family. It depends on Mg(2+) as a cofactor. Thiamine diphosphate is required as a cofactor.

The protein localises to the mitochondrion. The catalysed reaction is 2 pyruvate + H(+) = (2S)-2-acetolactate + CO2. The protein operates within amino-acid biosynthesis; L-isoleucine biosynthesis; L-isoleucine from 2-oxobutanoate: step 1/4. Its pathway is amino-acid biosynthesis; L-valine biosynthesis; L-valine from pyruvate: step 1/4. This chain is Acetolactate synthase, mitochondrial (ILV2), found in Cryptococcus neoformans var. grubii serotype A (strain H99 / ATCC 208821 / CBS 10515 / FGSC 9487) (Filobasidiella neoformans var. grubii).